Consider the following 90-residue polypeptide: Acylphosphatase (90 aa).

The Acylphosphatase-like domain maps to 5 to 90 (SFVVHVWGQV…PPQKGGFHTN (86 aa)). Residues Arg20 and Asn38 contribute to the active site.

The protein belongs to the acylphosphatase family.

It catalyses the reaction an acyl phosphate + H2O = a carboxylate + phosphate + H(+). This chain is Acylphosphatase (acyP), found in Aeromonas salmonicida (strain A449).